Consider the following 380-residue polypeptide: Crotonobetainyl-CoA reductase (380 aa).

The protein belongs to the acyl-CoA dehydrogenase family. Homotetramer. The cofactor is FAD.

The protein resides in the cytoplasm. The catalysed reaction is 4-(trimethylamino)butanoyl-CoA + oxidized [electron-transfer flavoprotein] + H(+) = crotonobetainyl-CoA + reduced [electron-transfer flavoprotein]. It functions in the pathway amine and polyamine metabolism; carnitine metabolism. Functionally, catalyzes the reduction of crotonobetainyl-CoA to gamma-butyrobetainyl-CoA. The sequence is that of Crotonobetainyl-CoA reductase from Escherichia coli O6:K15:H31 (strain 536 / UPEC).